The chain runs to 536 residues: MKETGIHNKAASISTSGLKELSAVFYNLGPARLYEETIRRGEAELSAQGALVARTGQHTGRSPKDKFVVRDANTEDHVWWDNNKPMTPEAFELLYADFIEHAKGRELFVQDLIGGADADNKINARVITEYAWHSLFIRNLLIRPSQEALASYVPEMTIIDLPSFKADPERYGVRTETVIAVDLTRKIVLIGGTSYAGEMKKSVFTALNYILPAKGVMPMHCSANEGPNGDTAVFFGLSGTGKTTLSADPTRTLIGDDEHGWGEHGVFNFEGGCYAKTIRLSAEAEPEIYATTQRFGTVLENVVLDENRQPDFDDGSLTENTRCAYPLDFIPNASKSGKGGQPKNIIMLTADAFGVMPPIAKLTPAQAMYHFLSGYTAKVAATEKGVTEPEATFSTCFGAPFMPRHPSEYGNLLRKLIAEHKVDCWLVNTGWTGGAYGVGKRMPIKATRALLAAALDGSLNNAEFRIDPNFGFAVPVEVPGVESSILDPRSTWADKVAYDAQAKKLVDMFVSNFEKFESHVDHEVKDAAPAIRMAAE.

3 residues coordinate substrate: Arg61, Tyr195, and Lys201. ATP-binding positions include Lys201, His220, and 236-244 (GLSGTGKTT). The Mn(2+) site is built by Lys201 and His220. Position 257 (Asp257) interacts with Mn(2+). The ATP site is built by Glu285, Arg322, and Thr447. Arg322 is a binding site for substrate.

The protein belongs to the phosphoenolpyruvate carboxykinase (ATP) family. Mn(2+) serves as cofactor.

The protein localises to the cytoplasm. It carries out the reaction oxaloacetate + ATP = phosphoenolpyruvate + ADP + CO2. It participates in carbohydrate biosynthesis; gluconeogenesis. Involved in the gluconeogenesis. Catalyzes the conversion of oxaloacetate (OAA) to phosphoenolpyruvate (PEP) through direct phosphoryl transfer between the nucleoside triphosphate and OAA. This chain is Phosphoenolpyruvate carboxykinase (ATP), found in Brucella melitensis biotype 1 (strain ATCC 23456 / CCUG 17765 / NCTC 10094 / 16M).